Here is a 922-residue protein sequence, read N- to C-terminus: TBC1 domain family member 2A (922 aa).

The interval M1–R37 is disordered. Residues M1–K168 are interaction with CADH1. Positions T8–P17 are enriched in polar residues. Residues P43 to W141 form the PH domain. Residues N228–F297 are disordered. The segment covering L262 to A271 has biased composition (basic and acidic residues). Residues P275–P295 show a composition bias toward polar residues. Positions S298–P435 are interaction with RAC1. Coiled coils occupy residues A302–I333, L362–K417, and F443–K476. The Rab-GAP TBC domain occupies G619 to G811. Residues M869–L904 adopt a coiled-coil conformation. S914 is modified (phosphoserine).

In terms of assembly, interacts with activated RAC1 and CDH1.

Its subcellular location is the cytoplasm. The protein localises to the cytoplasmic vesicle. It localises to the cell junction. In terms of biological role, acts as a GTPase-activating protein for RAB7A. Signal effector acting as a linker between RAC1 and RAB7A, leading to RAB7A inactivation and subsequent inhibition of cadherin degradation and reduced cell-cell adhesion. This chain is TBC1 domain family member 2A (Tbc1d2), found in Mus musculus (Mouse).